The chain runs to 460 residues: Argininosuccinate lyase (460 aa).

It belongs to the lyase 1 family. Argininosuccinate lyase subfamily.

The protein resides in the cytoplasm. It catalyses the reaction 2-(N(omega)-L-arginino)succinate = fumarate + L-arginine. It participates in amino-acid biosynthesis; L-arginine biosynthesis; L-arginine from L-ornithine and carbamoyl phosphate: step 3/3. The chain is Argininosuccinate lyase from Buchnera aphidicola subsp. Cinara cedri (strain Cc).